The primary structure comprises 157 residues: Heavy metal-associated isoprenylated plant protein 16 (157 aa).

Residues 2-71 (KQKILIRIAM…KVAFAELVSV (70 aa)) enclose the HMA domain. The tract at residues 73–115 (KVEPPKDGDKKPEEEKKPEEKKPEEKKPEEKKPEPCCQPWQKP) is disordered. Residues 75–106 (EPPKDGDKKPEEEKKPEEKKPEEKKPEEKKPE) are compositionally biased toward basic and acidic residues. Cysteine 154 is subject to Cysteine methyl ester. A lipid anchor (S-farnesyl cysteine) is attached at cysteine 154. Positions 155 to 157 (RIM) are cleaved as a propeptide — removed in mature form.

This sequence belongs to the HIPP family.

Probable heavy-metal-binding protein. This Arabidopsis thaliana (Mouse-ear cress) protein is Heavy metal-associated isoprenylated plant protein 16.